The primary structure comprises 155 residues: Small ribosomal subunit protein uS7 (155 aa).

Belongs to the universal ribosomal protein uS7 family. Part of the 30S ribosomal subunit. Contacts proteins S9 and S11.

Functionally, one of the primary rRNA binding proteins, it binds directly to 16S rRNA where it nucleates assembly of the head domain of the 30S subunit. Is located at the subunit interface close to the decoding center, probably blocks exit of the E-site tRNA. The polypeptide is Small ribosomal subunit protein uS7 (Mycoplasma capricolum subsp. capricolum (strain California kid / ATCC 27343 / NCTC 10154)).